Consider the following 271-residue polypeptide: Uridine-cytidine kinase 1-B (271 aa).

Gly24–Thr32 provides a ligand contact to ATP. Residues Asp81, Tyr109, His114, Arg163, Arg172, and Gln180 each contribute to the substrate site. Asp209 is an ATP binding site. The segment at Arg240 to His271 is disordered. Over residues Leu246 to Gly259 the composition is skewed to low complexity. The segment covering Thr262 to His271 has biased composition (basic and acidic residues).

It belongs to the uridine kinase family.

The enzyme catalyses uridine + ATP = UMP + ADP + H(+). It catalyses the reaction cytidine + ATP = CMP + ADP + H(+). The protein operates within pyrimidine metabolism; CTP biosynthesis via salvage pathway; CTP from cytidine: step 1/3. Its pathway is pyrimidine metabolism; UMP biosynthesis via salvage pathway; UMP from uridine: step 1/1. In terms of biological role, phosphorylates uridine and cytidine to uridine monophosphate and cytidine monophosphate. Does not phosphorylate deoxyribonucleosides or purine ribonucleosides. Can use ATP or GTP as a phosphate donor. The sequence is that of Uridine-cytidine kinase 1-B (uck1-b) from Xenopus laevis (African clawed frog).